The following is a 356-amino-acid chain: Phosphate acyltransferase (356 aa).

The protein belongs to the PlsX family. Homodimer. Probably interacts with PlsY.

It localises to the cytoplasm. The catalysed reaction is a fatty acyl-[ACP] + phosphate = an acyl phosphate + holo-[ACP]. Its pathway is lipid metabolism; phospholipid metabolism. In terms of biological role, catalyzes the reversible formation of acyl-phosphate (acyl-PO(4)) from acyl-[acyl-carrier-protein] (acyl-ACP). This enzyme utilizes acyl-ACP as fatty acyl donor, but not acyl-CoA. The protein is Phosphate acyltransferase of Escherichia coli (strain 55989 / EAEC).